We begin with the raw amino-acid sequence, 489 residues long: Rhamnulokinase (489 aa).

Position 13–17 (13–17) interacts with ATP; it reads ASSGR. A disulfide bond links C68 and C222. Substrate is bound by residues G83 and 236 to 238; that span reads HDT. The active-site Proton acceptor is D237. ATP is bound at residue T259. N296 serves as a coordination point for substrate. Q304 contacts ATP. C353 and C370 form a disulfide bridge. G402 contacts ATP. A disulfide bridge links C413 with C417.

Belongs to the rhamnulokinase family. Requires Mg(2+) as cofactor.

It catalyses the reaction L-rhamnulose + ATP = L-rhamnulose 1-phosphate + ADP + H(+). Its pathway is carbohydrate degradation; L-rhamnose degradation; glycerone phosphate from L-rhamnose: step 2/3. In terms of biological role, involved in the catabolism of L-rhamnose (6-deoxy-L-mannose). Catalyzes the transfer of the gamma-phosphate group from ATP to the 1-hydroxyl group of L-rhamnulose to yield L-rhamnulose 1-phosphate. The polypeptide is Rhamnulokinase (Salmonella dublin (strain CT_02021853)).